The following is a 158-amino-acid chain: UPF0735 ACT domain-containing protein Bsph_3944 (158 aa).

One can recognise an ACT domain in the interval 80–155 (TVFLQLQDRK…FVESAEVISS (76 aa)).

It belongs to the UPF0735 family.

The polypeptide is UPF0735 ACT domain-containing protein Bsph_3944 (Lysinibacillus sphaericus (strain C3-41)).